Consider the following 940-residue polypeptide: Phagocyte signaling-impaired protein (940 aa).

Residues 77–110 form a TPR repeat; that stretch reads STTLHVMTLCYKETDQLDKICQIFTSASKQLPGN.

Belongs to the MDM20/NAA25 family. Component of the N-terminal acetyltransferase B (NatB) complex.

Its subcellular location is the lysosome. Its function is as follows. Non-catalytic subunit of the NatB complex which catalyzes acetylation of the N-terminal methionine residues of proteins beginning with Met-Asp or Met-Glu. Has 2 roles in the larval immune response: required both for the phagocytic degradation of internalized bacteria and for the induction of Defensin in the fat body. Within the phagocytic blood cells, has a role in detection of infection and activation of the humoral immune response. The sequence is that of Phagocyte signaling-impaired protein from Aedes aegypti (Yellowfever mosquito).